Here is a 253-residue protein sequence, read N- to C-terminus: CTP:phosphoglutamine cytidylyltransferase (253 aa).

It catalyses the reaction N(5)-phospho-L-glutamine + CTP + H(+) = N(5)-(cytidine 5'-diphosphoramidyl)-L-glutamine + diphosphate. It functions in the pathway capsule biogenesis; capsule polysaccharide biosynthesis. Involved in the biosynthesis of the O-methyl phosphoramidate (MeOPN) group found on the capsular polysaccharide (CPS) of C.jejuni. Catalyzes the formation of CDP-L-glutamine from CTP and L-glutamine phosphate. In the presence of MnCTP, catalyzes the displacement of pyrophosphate from CTP using phosphoramidate, methyl phosphate, methyl phosphonate, phosphate, arsenate, ethanolamine phosphate, (R/S)-glycerol-1-phosphate, glycerol-2-phosphate, serinol phosphate, L-serine phosphate and 3-phospho-D-glycerate as substrate in addition to L-glutamine phosphate. This Campylobacter jejuni subsp. jejuni serotype O:2 (strain ATCC 700819 / NCTC 11168) protein is CTP:phosphoglutamine cytidylyltransferase.